We begin with the raw amino-acid sequence, 506 residues long: Trans-cinnamate 4-monooxygenase (506 aa).

A helical transmembrane segment spans residues 3–23 (DFVLLEKALLGLFIATIVAIT). Residues 214–219 (RSRLAQ) and alanine 307 contribute to the (E)-cinnamate site. Position 448 (cysteine 448) interacts with heme.

The protein belongs to the cytochrome P450 family. Heme serves as cofactor.

Its subcellular location is the membrane. The enzyme catalyses (E)-cinnamate + reduced [NADPH--hemoprotein reductase] + O2 = (E)-4-coumarate + oxidized [NADPH--hemoprotein reductase] + H2O + H(+). It participates in phenylpropanoid metabolism; trans-4-coumarate biosynthesis; trans-4-coumarate from trans-cinnamate: step 1/1. Its function is as follows. Catalyzes the first oxidative step of the phenylpropanoid pathway in higher plants by transforming trans-cinnamate into p-coumarate. The compounds formed by this pathway are essential components for lignification, pollination, and defense against ultraviolet light, predators and pathogens. The chain is Trans-cinnamate 4-monooxygenase (CYP73A10) from Petroselinum crispum (Parsley).